The sequence spans 392 residues: Tryptophan synthase beta chain (392 aa).

K84 bears the N6-(pyridoxal phosphate)lysine mark.

Belongs to the TrpB family. As to quaternary structure, tetramer of two alpha and two beta chains. Requires pyridoxal 5'-phosphate as cofactor.

It catalyses the reaction (1S,2R)-1-C-(indol-3-yl)glycerol 3-phosphate + L-serine = D-glyceraldehyde 3-phosphate + L-tryptophan + H2O. It participates in amino-acid biosynthesis; L-tryptophan biosynthesis; L-tryptophan from chorismate: step 5/5. Functionally, the beta subunit is responsible for the synthesis of L-tryptophan from indole and L-serine. This chain is Tryptophan synthase beta chain (trpB), found in Chlamydia trachomatis serovar D (strain ATCC VR-885 / DSM 19411 / UW-3/Cx).